A 240-amino-acid chain; its full sequence is DNA repair protein RecO (240 aa).

This sequence belongs to the RecO family.

Its function is as follows. Involved in DNA repair and RecF pathway recombination. The protein is DNA repair protein RecO of Wolbachia sp. subsp. Drosophila simulans (strain wRi).